Reading from the N-terminus, the 5386-residue chain is Nonribosomal peptide synthetase 2 (5386 aa).

An adenylation 1 region spans residues 45–435; it reads HDANAIDFLE…QGLLECLGRV (391 aa). A Carrier 1 domain is found at 544–617; that stretch reads SPKDPIGHSV…DLIEVCRESK (74 aa). Ser-578 is subject to O-(pantetheine 4'-phosphoryl)serine. Positions 652-1059 are condensation 1; it reads LPCTPLQEAM…VDADRHVSAI (408 aa). The interval 1089-1482 is adenylation 2; sequence EKWAATDPHR…GRTDDQVKIR (394 aa). In terms of domain architecture, Carrier 2 spans 1611–1688; that stretch reads ELLSQWERDV…SLASLKKLQS (78 aa). Residue Ser-1648 is modified to O-(pantetheine 4'-phosphoryl)serine. The tract at residues 1731–2141 is condensation 2; sequence ILPCTPLQEA…ALSADTDMFP (411 aa). Residues 2166 to 2551 are adenylation 3; that stretch reads FERTALLHPD…GRLDDQVKIR (386 aa). One can recognise a Carrier 3 domain in the interval 2652–2725; sequence SKTESEVRNI…DLAEHLDQIS (74 aa). Residue Ser-2686 is modified to O-(pantetheine 4'-phosphoryl)serine. The interval 2763-3174 is condensation 3; sequence RPCTPLQNGM…HSQIPLAKTD (412 aa). Positions 3202 to 3603 are adenylation 4; that stretch reads EKTAQEHPQR…GRADDQVKLR (402 aa). The Carrier 4 domain maps to 3728 to 3805; it reads EQWSKQEEKL…RLAKSLAANS (78 aa). An O-(pantetheine 4'-phosphoryl)serine modification is found at Ser-3765. Positions 3846–4250 are condensation 4; it reads LAPCTPLQQG…LDQAINDPSA (405 aa). The region spanning 4281–4357 is the Carrier 5 domain; it reads FEWSDNAIAI…KMAQNMSMKN (77 aa). An O-(pantetheine 4'-phosphoryl)serine modification is found at Ser-4318. Positions 4391 to 4802 are condensation 5; the sequence is EEILPLTPLQ…ERAEAPVIDM (412 aa). The segment at 4821 to 4842 is disordered; it reads HTGSGHVESGEDDGQDTPSTET. The 74-residue stretch at 4840–4913 folds into the Carrier 6 domain; it reads TETTNRIRKI…KMAKLADARA (74 aa). Position 4874 is an O-(pantetheine 4'-phosphoryl)serine (Ser-4874). The interval 4952–5257 is condensation 6; it reads QMLPVTAGQL…VQAHLRHLND (306 aa).

This sequence belongs to the NRP synthetase family.

It participates in siderophore biosynthesis. Nonribosomal peptide synthetase; part of the gene cluster that mediates the biosynthesis of hydroxamate-containing siderophores that play a critical role in virulence. Cochliobolus heterostrophus produces extracellular coprogen-type siderophores including coprogen, neocoprogen I and neocoprogen II, as well as the intracellular siderophore ferricrocin. The role of extracellular siderophores is to supply iron to the fungus during plant infection, and the intracellular ferricrocin is required for intracellular iron distribution and storage with a crucial role in ascus and ascospore development. SIDA2 catalyzes the conversion of L-ornithine to N(5)-hydroxyornithine, the first step in the biosynthesis of all hydroxamate-containing siderophores. The assembly of extracellular coprogen-type siderophores is then performed by the nonribosomal peptide synthetase (NRPS) NPS6 whereas the intracellular siderophore ferricrocin is assembled by NPS2. This is Nonribosomal peptide synthetase 2 from Cochliobolus heterostrophus (strain C4 / ATCC 48331 / race T) (Southern corn leaf blight fungus).